A 209-amino-acid polypeptide reads, in one-letter code: ATP-dependent Clp protease proteolytic subunit 2 (209 aa).

Ser106 serves as the catalytic Nucleophile. Residue His131 is part of the active site.

It belongs to the peptidase S14 family. In terms of assembly, fourteen ClpP subunits assemble into 2 heptameric rings which stack back to back to give a disk-like structure with a central cavity, resembling the structure of eukaryotic proteasomes.

The protein resides in the cytoplasm. The catalysed reaction is Hydrolysis of proteins to small peptides in the presence of ATP and magnesium. alpha-casein is the usual test substrate. In the absence of ATP, only oligopeptides shorter than five residues are hydrolyzed (such as succinyl-Leu-Tyr-|-NHMec, and Leu-Tyr-Leu-|-Tyr-Trp, in which cleavage of the -Tyr-|-Leu- and -Tyr-|-Trp bonds also occurs).. Cleaves peptides in various proteins in a process that requires ATP hydrolysis. Has a chymotrypsin-like activity. Plays a major role in the degradation of misfolded proteins. The protein is ATP-dependent Clp protease proteolytic subunit 2 of Mesorhizobium japonicum (strain LMG 29417 / CECT 9101 / MAFF 303099) (Mesorhizobium loti (strain MAFF 303099)).